Here is a 417-residue protein sequence, read N- to C-terminus: Queuine tRNA-ribosyltransferase accessory subunit 2 (417 aa).

The Zn(2+) site is built by C324, C326, C329, and H355.

The protein belongs to the queuine tRNA-ribosyltransferase family. QTRT2 subfamily. Heterodimer of a catalytic subunit and an accessory subunit. It depends on Zn(2+) as a cofactor.

It localises to the cytoplasm. Non-catalytic subunit of the queuine tRNA-ribosyltransferase (TGT) that catalyzes the base-exchange of a guanine (G) residue with queuine (Q) at position 34 (anticodon wobble position) in tRNAs with GU(N) anticodons (tRNA-Asp, -Asn, -His and -Tyr), resulting in the hypermodified nucleoside queuosine (7-(((4,5-cis-dihydroxy-2-cyclopenten-1-yl)amino)methyl)-7-deazaguanosine). The polypeptide is Queuine tRNA-ribosyltransferase accessory subunit 2 (Drosophila persimilis (Fruit fly)).